The sequence spans 615 residues: MSSNIAITTEPEGKNKKGLKSDPFIFSISVGFIVVFVIATIALGEKARTTFSAIAGWLLENLGWMYIGGVSLVFIFLMGIFASRYGRVKLGDDDDDPEHTLIVWFCMLFAGGVGAVLMFWGVAEPINHAFNVPMANEESMSEAAIVQAFAYTFYHFGIHMWVIMALPGLSLGYFIYKRKLPPRLSSVFSPILGKHIYSTPGKLIDVLAIVGTTFGIAVSVGLGVLQINAGMNKLWSTPQVSWVQLLIILIITAVACISVASGLDKGIKLLSNINIAMAVALMFFILFTGPTLTLLRFLVESFGIYASWMPNLMFWTDSFQDNPGWQGKWTVFYWAWTICWSPYVGMFVARISRGRTVREFIGGVLALPAIFGVVWFSIFGRAGIEVELSNPGFLTQPTVVEGDVPAALFNVLQEYPLTGIVSAFALVIIVIFFITSIDSAALVNDMFATGAENQTPTSYRVMWACTIGAVAGSLLIISPSSGIATLQEVVIIVAFPFFLVQFVMMFSLLKGMSEDAAAVRRVQTRQWEKTDTPEKLEEHSSQPAPGYDDEGNPLPMPALEHDEDGNIVIPGNVVIEGDLGVVGDVVDDPEEAQEMGSRFKIVEQTRPQSRDEYDI.

12 consecutive transmembrane segments (helical) span residues 24–44 (FIFS…IALG), 62–82 (LGWM…GIFA), 102–122 (IVWF…FWGV), 156–176 (FGIH…YFIY), 207–227 (LAIV…VLQI), 240–260 (VSWV…ISVA), 275–295 (IAMA…LTLL), 329–349 (WTVF…MFVA), 360–380 (FIGG…SIFG), 417–437 (LTGI…ITSI), 463–483 (WACT…SSGI), and 489–509 (VVII…FSLL). Disordered stretches follow at residues 524–562 (TRQW…LEHD) and 589–615 (PEEA…EYDI). Composition is skewed to basic and acidic residues over residues 526–540 (QWEK…EEHS) and 600–615 (KIVE…EYDI).

It belongs to the BCCT transporter (TC 2.A.15) family.

The protein resides in the cell membrane. Its function is as follows. Involved in the uptake of osmoprotectants. Can transport ectoine, proline and glycine betaine. Na(+) is probably the coupling ion. The sequence is that of Ectoine/glycine betaine/proline transporter EctP from Corynebacterium glutamicum (strain ATCC 13032 / DSM 20300 / JCM 1318 / BCRC 11384 / CCUG 27702 / LMG 3730 / NBRC 12168 / NCIMB 10025 / NRRL B-2784 / 534).